Reading from the N-terminus, the 397-residue chain is Elongation factor Tu (397 aa).

The tr-type G domain occupies 10–207; sequence LPHVNVGTIG…TLDSYIPEPV (198 aa). Positions 19-26 are G1; that stretch reads GHVDHGKT. Position 19–26 (19–26) interacts with GTP; it reads GHVDHGKT. Mg(2+) is bound at residue T26. Residues 60–64 are G2; it reads GITIN. The segment at 81–84 is G3; that stretch reads DCPG. Residues 81–85 and 136–139 each bind GTP; these read DCPGH and NKAD. A G4 region spans residues 136 to 139; sequence NKAD. The G5 stretch occupies residues 174–176; it reads SAR.

This sequence belongs to the TRAFAC class translation factor GTPase superfamily. Classic translation factor GTPase family. EF-Tu/EF-1A subfamily. As to quaternary structure, monomer.

Its subcellular location is the cytoplasm. It carries out the reaction GTP + H2O = GDP + phosphate + H(+). In terms of biological role, GTP hydrolase that promotes the GTP-dependent binding of aminoacyl-tRNA to the A-site of ribosomes during protein biosynthesis. This chain is Elongation factor Tu, found in Pseudomonas syringae pv. syringae (strain B728a).